The following is a 91-amino-acid chain: Putative ribonuclease inhibitor YrdF (91 aa).

Belongs to the barstar family.

It localises to the cytoplasm. In Bacillus subtilis (strain 168), this protein is Putative ribonuclease inhibitor YrdF (yrdF).